The sequence spans 114 residues: Replication initiation control protein YabA (114 aa).

Zn(2+) is bound by residues histidine 79, cysteine 81, cysteine 95, and cysteine 98.

It belongs to the YabA family. Homotetramer. Interacts with both DnaA and DnaN, acting as a bridge between these two proteins. Zn(2+) serves as cofactor.

The protein localises to the cytoplasm. Its subcellular location is the nucleoid. Its function is as follows. Involved in control of chromosome replication initiation. Inhibits the cooperative binding of DnaA to the oriC region, thus negatively regulating initiation of chromosome replication. Inhibits the ability of DnaA-ATP to form a helix on DNA; does not disassemble preformed DnaA-DNA helices. Decreases the residence time of DnaA on the chromosome at its binding sites (oriC, replication forks and promoter-binding sites). Tethers DnaA to the replication machinery via the DNA polymerase beta sliding clamp subunit (dnaN). Associates with oriC and other DnaA targets on the chromosome in a DnaA-dependent manner. The polypeptide is Replication initiation control protein YabA (Lactobacillus johnsonii (strain CNCM I-12250 / La1 / NCC 533)).